Reading from the N-terminus, the 1126-residue chain is Formin-B (1126 aa).

The disordered stretch occupies residues 1–21 (MFFKGKKKDKEKEKSHGNIGN). The GBD/FH3 domain maps to 38 to 406 (EQNLSNEDLK…LILKDPSKES (369 aa)). A compositionally biased stretch (low complexity) spans 427 to 447 (LNNSNNNNNNNNSNNNNNDSN). The disordered stretch occupies residues 427-462 (LNNSNNNNNNNNSNNNNNDSNVSTPNINTGSPLLPP). Residues 448 to 462 (VSTPNINTGSPLLPP) show a composition bias toward polar residues. Positions 463-514 (QQYQDLEQKLQLTQNEKNESQNKVKQLESEIKGLNSTLTGLQLKVTKLEADL) form a coiled coil. A compositionally biased stretch (polar residues) spans 518-532 (SVTTPPSDTNGTTSP). Disordered stretches follow at residues 518-619 (SVTT…SVPS) and 1004-1078 (ARKK…QNGT). Residues 527-611 (NGTTSPPIEA…PGAPAVPNLP (85 aa)) enclose the FH1 domain. Positions 543 to 597 (GAPPPPPPPPPAPPVSGGGPPPPPPPPPPSSGGGPPPPPPPPSSGGPPPPPPPPG) are enriched in pro residues. Low complexity-rich tracts occupy residues 598–607 (GMKKPGAPAV), 1009–1022 (AASGPSVPSASGSS), and 1032–1064 (SPITPTSKSSISISQKPPQSTQPSISVQQQQQQ). Positions 612–1011 (PKKSSVPSVK…LAARKKAAAS (400 aa)) constitute an FH2 domain. Residues 980–1010 (KFKNEFKRTIESIQKERENVQKLAARKKAAA) are a coiled coil. The 30-residue stretch at 1071-1100 (DDIPQNGTFMDQLMSKMKGGEAIRASRRAS) folds into the DAD domain.

This sequence belongs to the formin homology family. Diaphanous subfamily. In terms of assembly, interacts (via GBD/FH3 domain) with activated Rho-GTPases. Interacts with pfyA and pfyB.

In terms of biological role, formins play an important role in the nucleation of actin and the formation of linear actin filaments. This is Formin-B (forB) from Dictyostelium discoideum (Social amoeba).